Consider the following 228-residue polypeptide: Ribonuclease 3 (228 aa).

Positions 5 to 127 (LTALQERLKH…LIGAVYLDAG (123 aa)) constitute an RNase III domain. Residue Glu40 participates in Mg(2+) binding. Asp44 is a catalytic residue. Positions 113 and 116 each coordinate Mg(2+). Glu116 is a catalytic residue. The 71-residue stretch at 154-224 (DPKTELQEWL…AAAMLIRLKA (71 aa)) folds into the DRBM domain.

This sequence belongs to the ribonuclease III family. In terms of assembly, homodimer. The cofactor is Mg(2+).

It is found in the cytoplasm. It carries out the reaction Endonucleolytic cleavage to 5'-phosphomonoester.. Its function is as follows. Digests double-stranded RNA. Involved in the processing of primary rRNA transcript to yield the immediate precursors to the large and small rRNAs (23S and 16S). Processes some mRNAs, and tRNAs when they are encoded in the rRNA operon. Processes pre-crRNA and tracrRNA of type II CRISPR loci if present in the organism. The chain is Ribonuclease 3 from Variovorax paradoxus (strain S110).